A 1264-amino-acid chain; its full sequence is Valine--tRNA ligase (1264 aa).

Residue Ser-2 is modified to N-acetylserine. The region spanning 89–219 (GSRAAVLVQQ…YSGARSVTQQ (131 aa)) is the GST C-terminal domain. The segment covering 218–230 (QQPGSEITAPQKT) has biased composition (polar residues). The interval 218–296 (QQPGSEITAP…GEKKDVSGTM (79 aa)) is disordered. 2 stretches are compositionally biased toward basic and acidic residues: residues 234 to 248 (LKKEAKKREKLEKFQ) and 260 to 275 (HGEKKPKPEKKEKRDP). Positions 344 to 354 (PNVTGSLHLGH) match the 'HIGH' region motif. Phosphoserine occurs at positions 437 and 527. Lys-645 carries the post-translational modification N6-acetyllysine. The 'KMSKS' region signature appears at 862–866 (KMSKS). Lys-865 is an ATP binding site.

This sequence belongs to the class-I aminoacyl-tRNA synthetase family. In terms of assembly, forms high-molecular-mass aggregates with elongation factor 1.

It carries out the reaction tRNA(Val) + L-valine + ATP = L-valyl-tRNA(Val) + AMP + diphosphate. With respect to regulation, can be regulated by protein kinase C-dependent phosphorylation. In Rattus norvegicus (Rat), this protein is Valine--tRNA ligase (Vars1).